The following is a 102-amino-acid chain: MANNKSSKKRVEIAERNRLQNKAYKSSMRTLMKRCFSACEAYNATPGDEAKTSVQASMNAAFSKIDKAVKRGVLHRNAGAHQKARLSVAVKKAIDPAPASAS.

It belongs to the bacterial ribosomal protein bS20 family.

In terms of biological role, binds directly to 16S ribosomal RNA. The protein is Small ribosomal subunit protein bS20 of Synechococcus sp. (strain WH7803).